The chain runs to 165 residues: Type II secretion system protein M (165 aa).

Residues 1–22 lie on the Cytoplasmic side of the membrane; it reads MKELLAPVQAWWRSVTPREQKM. A helical membrane pass occupies residues 23-43; it reads VMGMGALTVLAIAYWGIWQPL. Over 44–165 the chain is Periplasmic; that stretch reads SERTAQAQAR…VKRLQLKRGG (122 aa).

Belongs to the GSP M family. In terms of assembly, type II secretion system is composed of four main components: the outer membrane complex, the inner membrane complex, the cytoplasmic secretion ATPase and the periplasm-spanning pseudopilus. Forms homodimers. Interacts with EpsL/GspL. Interacts with EpsE/GspE. Interacts with EpsF/GspF.

It is found in the cell inner membrane. Its function is as follows. Inner membrane component of the type II secretion system required for the energy-dependent secretion of extracellular factors such as proteases and toxins from the periplasm. Plays a role in the complex assembly and recruits EpsL resulting in a stable complex in the inner membrane. Provides thus a link between the energy-providing EpsE protein in the cytoplasm and the rest of the T2SS machinery. The protein is Type II secretion system protein M (epsM) of Vibrio cholerae serotype O1 (strain ATCC 39315 / El Tor Inaba N16961).